The sequence spans 297 residues: Alpha-tubulin N-acetyltransferase 1 (297 aa).

The region spanning 1–184 (MDFPYDLNAL…NNFVVFAGFF (184 aa)) is the N-acetyltransferase domain. Acetyl-CoA-binding positions include 118–131 (FYVTETLQRHGYGS) and 154–163 (SPKFLSFLEK). Positions 226–297 (FVRPGGPPHS…SLNRSRLSFH (72 aa)) are disordered. A compositionally biased stretch (pro residues) spans 230–240 (GGPPHSPPLLP). Residues 241–264 (SSPQSRSLSVGSSPSRAPLRPAAA) show a composition bias toward low complexity. 2 stretches are compositionally biased toward polar residues: residues 266 to 278 (VLQQGQTPSSPLN) and 286 to 297 (TSSLNRSRLSFH).

It belongs to the acetyltransferase ATAT1 family. As to quaternary structure, monomer.

It localises to the cytoplasm. Its subcellular location is the membrane. The protein localises to the clathrin-coated pit. It is found in the cell junction. The protein resides in the focal adhesion. It localises to the cell projection. Its subcellular location is the axon. The protein localises to the cytoskeleton. It is found in the spindle. It catalyses the reaction L-lysyl-[alpha-tubulin] + acetyl-CoA = N(6)-acetyl-L-lysyl-[alpha-tubulin] + CoA + H(+). In terms of biological role, specifically acetylates 'Lys-40' in alpha-tubulin on the lumenal side of microtubules. Promotes microtubule destabilization and accelerates microtubule dynamics; this activity may be independent of acetylation activity. Acetylates alpha-tubulin with a slow enzymatic rate, due to a catalytic site that is not optimized for acetyl transfer. Enters the microtubule through each end and diffuses quickly throughout the lumen of microtubules. Acetylates only long/old microtubules because of its slow acetylation rate since it does not have time to act on dynamically unstable microtubules before the enzyme is released. May be involved in neuron development. Acetylates alpha-tubulin in neurons, but not in cilia. This Danio rerio (Zebrafish) protein is Alpha-tubulin N-acetyltransferase 1.